A 217-amino-acid polypeptide reads, in one-letter code: NADH-quinone oxidoreductase subunit I (217 aa).

The disordered stretch occupies residues 22–41 (TTEQYPEEKKETAPRFHGRH). 4Fe-4S ferredoxin-type domains lie at 43–73 (LNRH…VEGA) and 89–118 (RVYQ…MSND). [4Fe-4S] cluster is bound by residues Cys53, Cys56, Cys59, Cys63, Cys98, Cys101, Cys104, and Cys108. Residues 193 to 217 (ARRTAGEHSRADEVPAHGAGSERPR) form a disordered region.

The protein belongs to the complex I 23 kDa subunit family. In terms of assembly, NDH-1 is composed of 14 different subunits. Subunits NuoA, H, J, K, L, M, N constitute the membrane sector of the complex. [4Fe-4S] cluster is required as a cofactor.

It is found in the cell membrane. The enzyme catalyses a quinone + NADH + 5 H(+)(in) = a quinol + NAD(+) + 4 H(+)(out). Functionally, NDH-1 shuttles electrons from NADH, via FMN and iron-sulfur (Fe-S) centers, to quinones in the respiratory chain. The immediate electron acceptor for the enzyme in this species is believed to be ubiquinone. Couples the redox reaction to proton translocation (for every two electrons transferred, four hydrogen ions are translocated across the cytoplasmic membrane), and thus conserves the redox energy in a proton gradient. This chain is NADH-quinone oxidoreductase subunit I, found in Frankia casuarinae (strain DSM 45818 / CECT 9043 / HFP020203 / CcI3).